The sequence spans 197 residues: MAVSPKINRREHILQCLAQMLETNPGQRITTAKLASEVGVSEAALYRHFPSKARMFEGLIEFIEESLLSRINLIMDDEKDTMKRCQLVLQLLLIFAERNPGISRVLNGDALLGENERLRSRISNLFAKIETQLKQILREKTLREGKGFNLDEAILANLLLAFAEGRIAQFVRSEFKLKPTTHFDEQWRFIQHQLLQS.

The 61-residue stretch at 7–67 folds into the HTH tetR-type domain; the sequence is INRREHILQC…GLIEFIEESL (61 aa). Residues 30–49 constitute a DNA-binding region (H-T-H motif); sequence TTAKLASEVGVSEAALYRHF. Positions 109 to 136 form a coiled coil; that stretch reads DALLGENERLRSRISNLFAKIETQLKQI.

It belongs to the nucleoid occlusion factor SlmA family. Homodimer. Interacts with FtsZ.

It localises to the cytoplasm. The protein localises to the nucleoid. Functionally, required for nucleoid occlusion (NO) phenomenon, which prevents Z-ring formation and cell division over the nucleoid. Acts as a DNA-associated cell division inhibitor that binds simultaneously chromosomal DNA and FtsZ, and disrupts the assembly of FtsZ polymers. SlmA-DNA-binding sequences (SBS) are dispersed on non-Ter regions of the chromosome, preventing FtsZ polymerization at these regions. This chain is Nucleoid occlusion factor SlmA, found in Shewanella baltica (strain OS223).